Consider the following 1168-residue polypeptide: Carbamoyl phosphate synthase arginine-specific large chain, mitochondrial (1168 aa).

A mitochondrion-targeting transit peptide spans 1–51 (MLSTVHKAGRAPALLRHGRRVPVQASQLRALTSGAQNTSIFQTQANAAQRL). A carboxyphosphate synthetic domain region spans residues 86-483 (RDHVDVKKVL…SFQKAIRQVD (398 aa)). ATP contacts are provided by residues R213, 243–298 (ANKI…WKEV), R253, G259, G260, K290, L292, E297, G323, I324, H325, Q366, and E380. The ATP-grasp 1 domain maps to 217 to 409 (AKALEEINIP…LAYTAAKIGL (193 aa)). Q366, E380, and N382 together coordinate Mg(2+). Mn(2+) contacts are provided by Q366, E380, and N382. An oligomerization domain region spans residues 484-628 (PRFVGFQGDK…YTTYNASSHD (145 aa)). Residues 629-1017 (VTFEDKGTVI…AYWASLQSAM (389 aa)) are carbamoyl phosphate synthetic domain. Residues 754-951 (SEILDSIGVD…FIDAATKALV (198 aa)) form the ATP-grasp 2 domain. ATP contacts are provided by residues 780-837 (AEEV…AQEI), R790, K829, I831, E836, G861, V862, H863, S864, Q904, and E922. Q904, E922, and N924 together coordinate Mg(2+). Mn(2+)-binding residues include Q904, E922, and N924. Residues 1018–1152 (NFRVPEPGEG…AEKLPRPEGI (135 aa)) are allosteric domain. Positions 1019–1168 (FRVPEPGEGL…WSEFIGGKPL (150 aa)) constitute an MGS-like domain.

This sequence belongs to the CarB family. As to quaternary structure, heterodimer composed of 2 chains; the small (or glutamine) chain promotes the hydrolysis of glutamine to ammonia, which is used by the large (or ammonia) chain to synthesize carbamoyl phosphate. The cofactor is Mg(2+). Mn(2+) is required as a cofactor.

The protein localises to the mitochondrion matrix. It carries out the reaction hydrogencarbonate + L-glutamine + 2 ATP + H2O = carbamoyl phosphate + L-glutamate + 2 ADP + phosphate + 2 H(+). It catalyses the reaction hydrogencarbonate + NH4(+) + 2 ATP = carbamoyl phosphate + 2 ADP + phosphate + 2 H(+). Its pathway is amino-acid biosynthesis; L-arginine biosynthesis; carbamoyl phosphate from bicarbonate: step 1/1. Its function is as follows. Large subunit of the arginine-specific carbamoyl phosphate synthase (CPSase). CPSase catalyzes the formation of carbamoyl phosphate from the ammonia moiety of glutamine, hydrogencarbonate, and phosphate donated by ATP, the first step of the arginine biosynthetic pathway. The large subunit (synthetase) binds the substrates ammonia (free or transferred from glutamine from the small subunit), hydrogencarbonate and ATP and carries out an ATP-coupled ligase reaction, activating hydrogencarbonate by forming carboxy phosphate which reacts with ammonia to form carbamoyl phosphate. The protein is Carbamoyl phosphate synthase arginine-specific large chain, mitochondrial (arg-3) of Neurospora crassa (strain ATCC 24698 / 74-OR23-1A / CBS 708.71 / DSM 1257 / FGSC 987).